The sequence spans 24 residues: Caerin-2.1 (24 aa).

The protein belongs to the frog skin active peptide (FSAP) family. Caerin subfamily. In terms of tissue distribution, expressed by the skin dorsal glands.

It is found in the secreted. Inhibits the formation of NO by neuronal nitric oxide synthase. The chain is Caerin-2.1 from Litoria rothii (Roth's tree frog).